A 558-amino-acid chain; its full sequence is Polypeptide N-acetylgalactosaminyltransferase 16 (558 aa).

Residues 1 to 6 (MRKIRA) are Cytoplasmic-facing. The helical; Signal-anchor for type II membrane protein transmembrane segment at 7-26 (NAIAILTVAWILGTFYYLWQ) threads the bilayer. Residues 27-558 (DNRAHAASSG…AQQWQLLPHT (532 aa)) lie on the Lumenal side of the membrane. The interval 33–54 (ASSGGRGAQRAGRRSEQLREDR) is disordered. Over residues 45–54 (RRSEQLREDR) the composition is skewed to basic and acidic residues. Cystine bridges form between Cys-113-Cys-340, Cys-331-Cys-409, Cys-441-Cys-460, Cys-486-Cys-506, and Cys-530-Cys-543. The tract at residues 122 to 227 (LPATSVIITF…TEWLPPMLQR (106 aa)) is catalytic subdomain A. Asp-163 and Arg-188 together coordinate substrate. Asp-211 is a binding site for Mn(2+). Ser-212 lines the substrate pocket. Position 213 (His-213) interacts with Mn(2+). The interval 286–348 (PIRTPVIAGG…PCSRVGHVFR (63 aa)) is catalytic subdomain B. Trp-317 serves as a coordination point for substrate. Residue His-345 coordinates Mn(2+). Residues Arg-348, His-351, and Tyr-353 each coordinate substrate. Residues 428 to 555 (KEALPGIIKQ…DAQAQQWQLL (128 aa)) enclose the Ricin B-type lectin domain.

This sequence belongs to the glycosyltransferase 2 family. GalNAc-T subfamily. Requires Mn(2+) as cofactor.

The protein resides in the golgi apparatus membrane. It carries out the reaction L-seryl-[protein] + UDP-N-acetyl-alpha-D-galactosamine = a 3-O-[N-acetyl-alpha-D-galactosaminyl]-L-seryl-[protein] + UDP + H(+). The enzyme catalyses L-threonyl-[protein] + UDP-N-acetyl-alpha-D-galactosamine = a 3-O-[N-acetyl-alpha-D-galactosaminyl]-L-threonyl-[protein] + UDP + H(+). It participates in protein modification; protein glycosylation. Its function is as follows. Catalyzes the initial reaction in O-linked oligosaccharide biosynthesis, the transfer of an N-acetyl-D-galactosamine residue to a serine or threonine residue on the protein receptor. This is Polypeptide N-acetylgalactosaminyltransferase 16 (GALNT16) from Homo sapiens (Human).